A 246-amino-acid chain; its full sequence is Probable transcriptional regulatory protein HS_0508 (246 aa).

This sequence belongs to the TACO1 family.

Its subcellular location is the cytoplasm. This Histophilus somni (strain 129Pt) (Haemophilus somnus) protein is Probable transcriptional regulatory protein HS_0508.